The chain runs to 1357 residues: Kinectin (1357 aa).

At 1 to 6 the chain is on the cytoplasmic side; it reads MEFYES. The chain crosses the membrane as a helical; Signal-anchor for type II membrane protein span at residues 7–29; sequence AYFIVLIPSIVITVIFLFFWLFM. Topologically, residues 30 to 1357 are lumenal; it reads KETLYDEVLA…KEKEHYQVLE (1328 aa). Disordered stretches follow at residues 48–81 and 103–218; these read IPTK…ESVP and NVVE…KQKT. Residue serine 75 is modified to Phosphoserine; by FAM20C. Serine 77 carries the phosphoserine modification. Basic and acidic residues predominate over residues 121-135; sequence QKPVLEEQVIKESDA. Threonine 153 is modified (phosphothreonine). A Phosphoserine modification is found at serine 156. Over residues 161-171 the composition is skewed to basic residues; the sequence is SKKKPGQKKSK. N-linked (GlcNAc...) asparagine glycans are attached at residues asparagine 172, asparagine 435, asparagine 772, asparagine 904, and asparagine 1055. The span at 172–182 shows a compositional bias: basic and acidic residues; it reads NGSDDQDKKVE. The stretch at 330 to 1356 forms a coiled coil; it reads LIHQLQEKDK…TKEKEHYQVL (1027 aa). The residue at position 1084 (serine 1084) is a Phosphoserine. N-linked (GlcNAc...) asparagine glycans are attached at residues asparagine 1088 and asparagine 1263. Residue serine 1313 is modified to Phosphoserine. Residue asparagine 1329 is glycosylated (N-linked (GlcNAc...) asparagine).

The protein belongs to the kinectin family. Parallel homodimers formed between the membrane-bound and the cytosolic form, and also between 2 cytosolic forms. High levels in peripheral blood lymphocytes, testis and ovary, lower levels in spleen, thymus, prostate, small intestine and colon.

Its subcellular location is the endoplasmic reticulum membrane. Functionally, receptor for kinesin thus involved in kinesin-driven vesicle motility. Accumulates in integrin-based adhesion complexes (IAC) upon integrin aggregation by fibronectin. This chain is Kinectin (KTN1), found in Homo sapiens (Human).